The sequence spans 136 residues: HetP-like commitment protein Alr2902 (136 aa).

Over residues 94–109 the composition is skewed to polar residues; sequence KASTQDLNQSNNSDYL. The tract at residues 94 to 120 is disordered; it reads KASTQDLNQSNNSDYLTTPEPDKRGNI.

It belongs to the HetP family. As to quaternary structure, in bacterial two-hybrid assays interacts robustly with HetR and Alr3234 and weakly with itself, HetP and Asl1930.

Functionally, delays heterocyst differentiation and commitment when nitrogen is limiting. Interplay between the 4 HetP paralogs controls the timing of commitment to heterocyst formation and its duration. Epistatic analysis show that the 3 paralogs act upstream of hetP to delay commitment (asl1930, alr3234) or inhibit development (alr2902). Asl1930 and Alr3234 must also attenuate the activity of Alr2902. When only this homolog is present no heterocysts are formed, showing it inhibits development. Ectopic expression partially complements a hetP deletion. In Nostoc sp. (strain PCC 7120 / SAG 25.82 / UTEX 2576), this protein is HetP-like commitment protein Alr2902.